Here is a 314-residue protein sequence, read N- to C-terminus: Oxidoreductase NAD-binding domain-containing protein 1 (314 aa).

The signal sequence occupies residues 1–18 (MALVAGSAAYQVLRGVTG). The 104-residue stretch at 63–166 (EIISPAKVCE…VGGEFCFDPQ (104 aa)) folds into the FAD-binding FR-type domain. Residue 180 to 185 (GVGINP) coordinates NAD(+).

The protein is Oxidoreductase NAD-binding domain-containing protein 1 (oxnad1) of Xenopus tropicalis (Western clawed frog).